The chain runs to 800 residues: Ent-copalyl diphosphate synthase 2, chloroplastic (800 aa).

A chloroplast-targeting transit peptide spans 1 to 47 (MQMQVLTAASSLPRATLLRPAAAEPWRQSFLQLQARPIQRPGIMLHC). Residues 52–80 (QGQETRERRQLDDDEHARPPQGGDDDVAA) are disordered. Positions 55-69 (ETRERRQLDDDEHAR) are enriched in basic and acidic residues. Position 242 (K242) interacts with substrate. Residues D374 and D376 each coordinate Mg(2+). The DXDD motif signature appears at 374-377 (DIDD). K461 is a binding site for substrate.

This sequence belongs to the terpene synthase family. Mg(2+) serves as cofactor.

Its subcellular location is the plastid. The protein localises to the chloroplast. It catalyses the reaction (2E,6E,10E)-geranylgeranyl diphosphate = ent-copalyl diphosphate. Its pathway is secondary metabolite biosynthesis; terpenoid biosynthesis. Its function is as follows. Catalyzes the conversion of geranylgeranyl diphosphate to the phytoalexin precursor ent-copalyl diphosphate. In Oryza sativa subsp. japonica (Rice), this protein is Ent-copalyl diphosphate synthase 2, chloroplastic.